Here is a 309-residue protein sequence, read N- to C-terminus: Taste receptor type 2 member 8 (309 aa).

Over 1–7 (MFSPADN) the chain is Extracellular. Residues 8 to 28 (IFIILITGEFILGILGNGYIA) traverse the membrane as a helical segment. Residues 29–50 (LVNWIDWIKKKKISTVDYILTN) lie on the Cytoplasmic side of the membrane. Residues 51-71 (LVIARICLISVMVVNGIVIVL) traverse the membrane as a helical segment. Residues 72 to 82 (NPDVYTKNKQQ) are Extracellular-facing. A helical membrane pass occupies residues 83–103 (IVIFTFWTFANYLNMWITTCL). The Cytoplasmic portion of the chain corresponds to 104–131 (NVFYFLKIASSSHPLFLWLKWKIDMVVH). Residues 132-152 (WILLGCFAISLLVSLIAAIVL) traverse the membrane as a helical segment. The Extracellular portion of the chain corresponds to 153–184 (SCDYRFHAIAKHKRNITEMFXVSKIPYFEPLT). Asn167 carries N-linked (GlcNAc...) asparagine glycosylation. A helical membrane pass occupies residues 185 to 205 (LFNLFAIVPFIVSLISFFLLV). At 206–239 (RSLWRHTKQIKLYATGSRDPSTEVHVRAIKTMTS) the chain is on the cytoplasmic side. A helical membrane pass occupies residues 240–260 (FIFFFFLYFISSILMTFSYLM). At 261–266 (TKYKLA) the chain is on the extracellular side. The chain crosses the membrane as a helical span at residues 267–287 (VEFGEIAAILYPLGHSLILIV). Over 288 to 309 (LNNKLRQIFVRMLTCRKIACVI) the chain is Cytoplasmic.

This sequence belongs to the G-protein coupled receptor T2R family.

The protein resides in the membrane. In terms of biological role, receptor that may play a role in the perception of bitterness and is gustducin-linked. May play a role in sensing the chemical composition of the gastrointestinal content. The activity of this receptor may stimulate alpha gustducin, mediate PLC-beta-2 activation and lead to the gating of TRPM5. The polypeptide is Taste receptor type 2 member 8 (TAS2R8) (Pan troglodytes (Chimpanzee)).